A 262-amino-acid chain; its full sequence is UPF0758 protein BTH_I0781 (262 aa).

The disordered stretch occupies residues methionine 1–arginine 45. Positions valine 22–alanine 43 are enriched in low complexity. The region spanning leucine 140 to isoleucine 262 is the MPN domain. Zn(2+) contacts are provided by histidine 211, histidine 213, and aspartate 224. Residues histidine 211–aspartate 224 carry the JAMM motif motif.

Belongs to the UPF0758 family.

This Burkholderia thailandensis (strain ATCC 700388 / DSM 13276 / CCUG 48851 / CIP 106301 / E264) protein is UPF0758 protein BTH_I0781.